The following is a 457-amino-acid chain: Multidrug resistance protein MdtK (457 aa).

The next 12 membrane-spanning stretches (helical) occupy residues 11–31 (LLAL…MGFV), 53–73 (IWLP…PVIA), 93–113 (WLAG…GYII), 127–147 (AVGY…FQVA), 160–180 (GMVM…IFIY), 188–208 (LGGI…FIAM), 243–263 (LPIA…ALLV), 276–296 (IALN…AAVT), 314–334 (AART…IFTV), 350–370 (VVAL…SDSI), 387–407 (IFFI…YILA), and 418–438 (PAGF…LMML).

The protein belongs to the multi antimicrobial extrusion (MATE) (TC 2.A.66.1) family. MdtK subfamily.

The protein localises to the cell inner membrane. Multidrug efflux pump that functions probably as a Na(+)/drug antiporter. This chain is Multidrug resistance protein MdtK, found in Salmonella newport (strain SL254).